We begin with the raw amino-acid sequence, 77 residues long: Acyl carrier protein (77 aa).

One can recognise a Carrier domain in the interval 2-77; the sequence is SDIADRVKKI…DAVKFIQGAV (76 aa). Position 37 is an O-(pantetheine 4'-phosphoryl)serine (S37).

Belongs to the acyl carrier protein (ACP) family. In terms of processing, 4'-phosphopantetheine is transferred from CoA to a specific serine of apo-ACP by AcpS. This modification is essential for activity because fatty acids are bound in thioester linkage to the sulfhydryl of the prosthetic group.

The protein localises to the cytoplasm. It participates in lipid metabolism; fatty acid biosynthesis. Carrier of the growing fatty acid chain in fatty acid biosynthesis. The sequence is that of Acyl carrier protein from Paracoccus denitrificans (strain Pd 1222).